The following is a 350-amino-acid chain: UDP-N-acetylenolpyruvoylglucosamine reductase (350 aa).

The 172-residue stretch at 24–195 (HVEATARWLL…VAVEFNLPLL (172 aa)) folds into the FAD-binding PCMH-type domain. Arginine 172 is an active-site residue. Serine 245 acts as the Proton donor in catalysis. Glutamate 342 is a catalytic residue.

It belongs to the MurB family. The cofactor is FAD.

It localises to the cytoplasm. The catalysed reaction is UDP-N-acetyl-alpha-D-muramate + NADP(+) = UDP-N-acetyl-3-O-(1-carboxyvinyl)-alpha-D-glucosamine + NADPH + H(+). It functions in the pathway cell wall biogenesis; peptidoglycan biosynthesis. In terms of biological role, cell wall formation. This Xanthomonas oryzae pv. oryzae (strain PXO99A) protein is UDP-N-acetylenolpyruvoylglucosamine reductase.